The sequence spans 315 residues: Ferrochelatase (315 aa).

His193 and Glu273 together coordinate Fe cation.

The protein belongs to the ferrochelatase family.

The protein localises to the cytoplasm. The catalysed reaction is heme b + 2 H(+) = protoporphyrin IX + Fe(2+). It functions in the pathway porphyrin-containing compound metabolism; protoheme biosynthesis; protoheme from protoporphyrin-IX: step 1/1. Catalyzes the ferrous insertion into protoporphyrin IX. The sequence is that of Ferrochelatase from Wolbachia pipientis wMel.